The following is a 359-amino-acid chain: tRNA-specific 2-thiouridylase MnmA (359 aa).

ATP contacts are provided by residues 9–16 (GMSGGVDS) and Met35. The active-site Nucleophile is Cys104. Cys104 and Cys200 form a disulfide bridge. Gly128 provides a ligand contact to ATP. The tract at residues 150–152 (KDQ) is interaction with tRNA. Catalysis depends on Cys200, which acts as the Cysteine persulfide intermediate. The interaction with tRNA stretch occupies residues 306–307 (RY).

Belongs to the MnmA/TRMU family.

The protein resides in the cytoplasm. The catalysed reaction is S-sulfanyl-L-cysteinyl-[protein] + uridine(34) in tRNA + AH2 + ATP = 2-thiouridine(34) in tRNA + L-cysteinyl-[protein] + A + AMP + diphosphate + H(+). In terms of biological role, catalyzes the 2-thiolation of uridine at the wobble position (U34) of tRNA, leading to the formation of s(2)U34. The chain is tRNA-specific 2-thiouridylase MnmA from Clostridium perfringens (strain ATCC 13124 / DSM 756 / JCM 1290 / NCIMB 6125 / NCTC 8237 / Type A).